The sequence spans 30 residues: Phospholemman-like protein (30 aa).

This sequence belongs to the FXYD family. Post-translationally, phosphorylated by protein kinase a (PK-A) and protein kinase C (PK-C). Phosphorylated in response to insulin and adrenergic stimulation.

It is found in the microsome membrane. It localises to the endoplasmic reticulum membrane. Its function is as follows. Induces a hyperpolarization-activated chloride current when expressed in Xenopus oocytes. May have a functional role in muscle contraction. This Squalus acanthias (Spiny dogfish) protein is Phospholemman-like protein.